We begin with the raw amino-acid sequence, 619 residues long: TOX high mobility group box family member 4 (619 aa).

Disordered regions lie at residues 155–227 (LSLG…QKPV) and 306–335 (DPVPQSQTPSPPPVTAADPASPAPASTESP). T176 carries the phosphothreonine modification. 2 positions are modified to phosphoserine: S178 and S182. The segment covering 183-193 (LHEDGVDDFRR) has biased composition (basic and acidic residues). The span at 208-218 (KQKAPKKRKKK) shows a compositional bias: basic residues. Positions 213–218 (KKRKKK) match the Nuclear localization signal motif. The HMG box DNA-binding region spans 223–291 (PQKPVSAYAL…EYLKALAAYK (69 aa)). The residue at position 313 (T313) is a Phosphothreonine. S315 carries the post-translational modification Phosphoserine. The span at 320–335 (TAADPASPAPASTESP) shows a compositional bias: low complexity. Asymmetric dimethylarginine is present on R479. Phosphoserine occurs at positions 531, 548, 550, 558, 560, and 565.

Component of the PNUTS-PP1 phosphatase complex, composed of PPP1R10/PNUTS, TOX4, WDR82 and PPP1CA or PPP1CB or PPP1CC. Interacts with PPP1R10/PNUTS. Interacts with FOXO1 and CREB1 (increased by cAMP); FOXO1 and CREB1 are required for full induction of TOX4-dependent activity and the interactions are inhibited by insulin.

Its subcellular location is the nucleus. It is found in the chromosome. In liver, recruited to target gene promoters following treatment with dexamethasone and cAMP. Binding is decreased in presence of insulin. Its function is as follows. Transcription factor that modulates cell fate reprogramming from the somatic state to the pluripotent and neuronal fate. In liver, controls the expression of hormone-regulated gluconeogenic genes such as G6PC1 and PCK1. This regulation is independent of the insulin receptor activation. Also acts as a regulatory component of protein phosphatase 1 (PP1) complexes. Component of the PNUTS-PP1 protein phosphatase complex, a PP1 complex that regulates RNA polymerase II transcription pause-release. PNUTS-PP1 also plays a role in the control of chromatin structure and cell cycle progression during the transition from mitosis into interphase. The protein is TOX high mobility group box family member 4 of Mus musculus (Mouse).